A 515-amino-acid chain; its full sequence is MDEFHRYGKEDNSRQQCFLYPLFFQEDLYAISHDHYLDGSSSSEPTEHLSSNDQFSFLTVKRLIGQIRQQNHSIVLFVNCAPNPLADCKKSSYSESVLEGLTLVLEVPFSIRSKYSVEGMNEWKSFRSIHSIFPFLEDKFPHSNYISDARIPYSIHPEILVRTFRRLIRDAPSLHPLRSVLYEYRNSPENLQRSIIVVPRVNTRFFLFLWNYYVYECESILFSLLKRSSHSRSLSHRPFPQRTHFHRKIKHIIIFSRRNSLKSIWLLKDPKINYVRYGERSIIAIKGTHLLLKKCRYYLLLFRQCYFHLWSEPYRVCSHQLSKNCSSSPGYFLRVRMNPLFVRTKMLDELFIADLITNEFDPIVPIVPILGLLAREKFCDVSGRPISKLSWTNLTDDDILNRFDQIWRNLFHYYSGSFGRDGLYRIKYILSLSCAKTLACKHKSTIRVVRKELGPELFQKSFSKEREFDSLPFSSKAAARSQRERIWHSDIPQINPLVNSWQKIQDLKIENLFDQ.

This sequence belongs to the intron maturase 2 family. MatK subfamily.

The protein resides in the plastid. It is found in the chloroplast. In terms of biological role, usually encoded in the trnK tRNA gene intron. Probably assists in splicing its own and other chloroplast group II introns. This chain is Maturase K, found in Pinus armandii (Chinese white pine).